The primary structure comprises 1360 residues: Zinc finger protein GLI1 (1360 aa).

The interval 198–245 is disordered; the sequence is DTIGSKRLEDGSEGDISSPASVGTQDPLLGLLDGRDDLEKDDGKHEPE. Residues 230–245 show a composition bias toward basic and acidic residues; it reads DGRDDLEKDDGKHEPE. Residues 250–275 form a C2H2-type 1 zinc finger; sequence TNCHWESCTKEFDTQEHLVHHINNEH. Residues 298–306 are interaction with DNA; sequence KAQYMLVVH. C2H2-type zinc fingers lie at residues 316–340, 346–371, and 377–402; these read HKCT…LRSH, YVCE…NRTH, and YVCK…KTVH. 2 interaction with DNA regions span residues 360–365 and 390–396; these read ASDRAK and DPSSLRK. Disordered regions lie at residues 390–434, 457–500, 718–740, and 1120–1213; these read DPSS…NVKG, ITLK…SFED, IIHP…RTGG, and YMNY…IQPQ. Residues 461–473 are compositionally biased toward low complexity; it reads SQPSPGGQSSCSS. A compositionally biased stretch (polar residues) spans 474 to 496; sequence ERSPLGSTNNNDSGVEMNANTGG. The span at 1134–1143 shows a compositional bias: low complexity; sequence SPSSQDSQSS. The segment covering 1173 to 1190 has biased composition (polar residues); the sequence is RQHSVSSQSTYMGSPNQL.

It belongs to the GLI C2H2-type zinc-finger protein family.

It is found in the cytoplasm. The protein resides in the nucleus. Functionally, acts as a transcriptional activator. Binds to the DNA consensus sequence 5'-GACCACCCA-3'. May regulate the transcription of specific genes during normal development. Mediates SHH signaling. Plays a role in cell proliferation and differentiation via its role in SHH signaling. The protein is Zinc finger protein GLI1 (gli1) of Xenopus laevis (African clawed frog).